Here is a 430-residue protein sequence, read N- to C-terminus: Trigger factor (430 aa).

In terms of domain architecture, PPIase FKBP-type spans 163 to 248; the sequence is GNIAIIDFKG…IKDIKVKELP (86 aa).

It belongs to the FKBP-type PPIase family. Tig subfamily.

Its subcellular location is the cytoplasm. The enzyme catalyses [protein]-peptidylproline (omega=180) = [protein]-peptidylproline (omega=0). Its function is as follows. Involved in protein export. Acts as a chaperone by maintaining the newly synthesized protein in an open conformation. Functions as a peptidyl-prolyl cis-trans isomerase. This Clostridium botulinum (strain Kyoto / Type A2) protein is Trigger factor.